We begin with the raw amino-acid sequence, 366 residues long: Uroporphyrinogen decarboxylase (366 aa).

Residues 28 to 32, Asp78, Tyr160, Thr215, and His333 each bind substrate; that span reads RQAGR.

It belongs to the uroporphyrinogen decarboxylase family. In terms of assembly, homodimer.

It localises to the cytoplasm. It catalyses the reaction uroporphyrinogen III + 4 H(+) = coproporphyrinogen III + 4 CO2. The protein operates within porphyrin-containing compound metabolism; protoporphyrin-IX biosynthesis; coproporphyrinogen-III from 5-aminolevulinate: step 4/4. Functionally, catalyzes the decarboxylation of four acetate groups of uroporphyrinogen-III to yield coproporphyrinogen-III. This is Uroporphyrinogen decarboxylase from Paraburkholderia phytofirmans (strain DSM 17436 / LMG 22146 / PsJN) (Burkholderia phytofirmans).